A 414-amino-acid chain; its full sequence is 3-oxoacyl-[acyl-carrier-protein] synthase 2 (414 aa).

The Ketosynthase family 3 (KS3) domain maps to 4–411; it reads NKRVVITGMG…GHNAVLVFKK (408 aa). Catalysis depends on for beta-ketoacyl synthase activity residues Cys-165, His-304, and His-341.

It belongs to the thiolase-like superfamily. Beta-ketoacyl-ACP synthases family.

It catalyses the reaction a fatty acyl-[ACP] + malonyl-[ACP] + H(+) = a 3-oxoacyl-[ACP] + holo-[ACP] + CO2. The enzyme catalyses (9Z)-hexadecenoyl-[ACP] + malonyl-[ACP] + H(+) = 3-oxo-(11Z)-octadecenoyl-[ACP] + holo-[ACP] + CO2. It participates in lipid metabolism; fatty acid biosynthesis. Functionally, involved in the type II fatty acid elongation cycle. Catalyzes the elongation of a wide range of acyl-ACP by the addition of two carbons from malonyl-ACP to an acyl acceptor. Can efficiently catalyze the conversion of palmitoleoyl-ACP (cis-hexadec-9-enoyl-ACP) to cis-vaccenoyl-ACP (cis-octadec-11-enoyl-ACP), an essential step in the thermal regulation of fatty acid composition. The sequence is that of 3-oxoacyl-[acyl-carrier-protein] synthase 2 (fabF) from Staphylococcus aureus (strain MW2).